Reading from the N-terminus, the 195-residue chain is Ubiquitin-conjugating enzyme E2 T (195 aa).

Positions 2–152 constitute a UBC core domain; that stretch reads QRTSRLKREL…ARQWTEKHAR (151 aa). The Glycyl thioester intermediate role is filled by C86. A Glycyl lysine isopeptide (Lys-Gly) (interchain with G-Cter in ubiquitin) cross-link involves residue K91. Basic and acidic residues predominate over residues 146–157; it reads WTEKHARQKTDE. Positions 146 to 195 are disordered; the sequence is WTEKHARQKTDEEGMPGSLPEVGGSEGPSAAQKRKAGQLSSGGKRFCPDV. Residue K180 forms a Glycyl lysine isopeptide (Lys-Gly) (interchain with G-Cter in ubiquitin) linkage. K189 participates in a covalent cross-link: Glycyl lysine isopeptide (Lys-Gly) (interchain with G-Cter in SUMO2).

This sequence belongs to the ubiquitin-conjugating enzyme family. As to quaternary structure, interacts with FANCL and BRCA1. Post-translationally, auto-ubiquitinated. Effects of auto-monoubiquitination at Lys-91 and Lys-180 are unclear.

It is found in the nucleus. The enzyme catalyses S-ubiquitinyl-[E1 ubiquitin-activating enzyme]-L-cysteine + [E2 ubiquitin-conjugating enzyme]-L-cysteine = [E1 ubiquitin-activating enzyme]-L-cysteine + S-ubiquitinyl-[E2 ubiquitin-conjugating enzyme]-L-cysteine.. It functions in the pathway protein modification; protein ubiquitination. Accepts ubiquitin from the E1 complex and catalyzes its covalent attachment to other proteins. Catalyzes monoubiquitination. Involved in mitomycin-C (MMC)-induced DNA repair: acts as a specific E2 ubiquitin-conjugating enzyme for the Fanconi anemia complex by associating with E3 ubiquitin-protein ligase FANCL and catalyzing monoubiquitination of FANCD2, a key step in the DNA damage pathway. Also mediates monoubiquitination of FANCL and FANCI. May contribute to ubiquitination and degradation of BRCA1. In vitro able to promote polyubiquitination using all 7 ubiquitin Lys residues, but may prefer 'Lys-11'-, 'Lys-27'-, 'Lys-48'- and 'Lys-63'-linked polyubiquitination. This Bos taurus (Bovine) protein is Ubiquitin-conjugating enzyme E2 T (UBE2T).